We begin with the raw amino-acid sequence, 443 residues long: Tubulin beta chain (443 aa).

The GTP site is built by Gln-11, Glu-69, Ser-138, Gly-142, Thr-143, Gly-144, Asn-204, and Asn-226. Glu-69 provides a ligand contact to Mg(2+). The segment at Glu-421 to Asn-443 is disordered. Positions Ser-429–Asn-443 are enriched in acidic residues.

The protein belongs to the tubulin family. Dimer of alpha and beta chains. A typical microtubule is a hollow water-filled tube with an outer diameter of 25 nm and an inner diameter of 15 nM. Alpha-beta heterodimers associate head-to-tail to form protofilaments running lengthwise along the microtubule wall with the beta-tubulin subunit facing the microtubule plus end conferring a structural polarity. Microtubules usually have 13 protofilaments but different protofilament numbers can be found in some organisms and specialized cells. Requires Mg(2+) as cofactor.

It is found in the cytoplasm. The protein resides in the cytoskeleton. Its function is as follows. Tubulin is the major constituent of microtubules, a cylinder consisting of laterally associated linear protofilaments composed of alpha- and beta-tubulin heterodimers. Microtubules grow by the addition of GTP-tubulin dimers to the microtubule end, where a stabilizing cap forms. Below the cap, tubulin dimers are in GDP-bound state, owing to GTPase activity of alpha-tubulin. This Polytomella agilis (Quadriflagellate alga) protein is Tubulin beta chain (TUBB1).